The sequence spans 391 residues: Phosphoglycerate kinase (391 aa).

Substrate-binding positions include 21 to 23, arginine 36, 59 to 62, arginine 113, and arginine 146; these read DLN and HLGR. Residues lysine 197, glutamate 319, and 345 to 348 contribute to the ATP site; that span reads GGDT.

The protein belongs to the phosphoglycerate kinase family. Monomer.

The protein localises to the cytoplasm. It catalyses the reaction (2R)-3-phosphoglycerate + ATP = (2R)-3-phospho-glyceroyl phosphate + ADP. It participates in carbohydrate degradation; glycolysis; pyruvate from D-glyceraldehyde 3-phosphate: step 2/5. This chain is Phosphoglycerate kinase, found in Shewanella sp. (strain MR-4).